The primary structure comprises 75 residues: uncharacterized protein (75 aa).

A run of 2 helical transmembrane segments spans residues 7–26 (LINA…AASA) and 36–58 (MHLF…FCPV).

The protein resides in the cell membrane. This is an uncharacterized protein from Bacillus subtilis (strain 168).